The following is a 384-amino-acid chain: Surfeit locus protein 1-like (384 aa).

The next 3 helical transmembrane spans lie at 55–75 (ALLW…YKFL), 302–322 (IPLD…TCFI), and 338–358 (IGVE…TKIY).

It belongs to the SURF1 (TC 3.D.4.8) family.

The protein localises to the mitochondrion inner membrane. May be involved in the biogenesis of the COX complex. In Arabidopsis thaliana (Mouse-ear cress), this protein is Surfeit locus protein 1-like.